Consider the following 423-residue polypeptide: Transmembrane protease serine 11E (423 aa).

Residues 1-18 are Cytoplasmic-facing; that stretch reads MYRSCVVRARKRTCVEPW. A helical; Signal-anchor for type II membrane protein membrane pass occupies residues 19-39; it reads VIGIISFLSLIVLAVCIGLTV. At 40–423 the chain is on the extracellular side; that stretch reads HYVRYNHRRT…RHWIASNTGI (384 aa). An SEA domain is found at 48–166; the sequence is RTYNYYSTLS…ESVKIKKINK (119 aa). N-linked (GlcNAc...) asparagine glycans are attached at residues N74, N165, N182, and N223. 4 cysteine pairs are disulfide-bonded: C176/C297, C217/C233, C342/C358, and C369/C398. The Peptidase S1 domain occupies 192 to 422; sequence IVGGTPVEEE…FRHWIASNTG (231 aa). Residues H232 and D277 each act as charge relay system in the active site. S373 (charge relay system) is an active-site residue.

This sequence belongs to the peptidase S1 family. In terms of assembly, forms a heterodimer with SERPINA5 and SERPINE1. Post-translationally, N-glycosylated. Expressed in epidermal, oral and male reproductive tissues.

Its subcellular location is the cell membrane. The protein resides in the secreted. With respect to regulation, inhibited by SERPINA5. Its function is as follows. Serine protease which possesses both gelatinolytic and caseinolytic activities. Shows a preference for Arg in the P1 position. The sequence is that of Transmembrane protease serine 11E (Tmprss11e) from Mus musculus (Mouse).